The sequence spans 594 residues: DELLA protein 1 (594 aa).

A disordered region spans residues 1–36 (MKREHQESFGGGVISNNNKTNTNHLNSSKNINFGEC). Low complexity predominate over residues 15-30 (SNNNKTNTNHLNSSKN). The DELLA motif motif lies at 61–65 (DELLA). The GRAS domain occupies 207 to 587 (VDTQETGVRL…RSLIATSAWK (381 aa)). The tract at residues 214-268 (VRLVHTLMACAEAIQQKNLKLAEALVKHISLLASLQTGAMRKVASYFAQALARRI) is leucine repeat I (LRI). The required for possible homodimerization stretch occupies residues 216–253 (LVHTLMACAEAIQQKNLKLAEALVKHISLLASLQTGAM). The short motif at 221 to 225 (MACAE) is the LxCxE motif; degenerate element. Positions 285-350 (HMHFYESSPY…GGPPTFRLTG (66 aa)) are VHIID. Residues 316 to 320 (VHVID) carry the VHIID motif. The leucine repeat II (LRII) stretch occupies residues 364-396 (QVGWKLAQLAQTIGVQFEFRGFVCNSIADLDPN). Residues 406-508 (VAVNSVFELH…EIYLGKQICN (103 aa)) form a PFYRE region. Positions 414 to 418 (LHTML) match the LXXLL motif; degenerate motif. The SAW stretch occupies residues 511–587 (AYEGVDRVER…RSLIATSAWK (77 aa)).

It belongs to the GRAS family. DELLA subfamily. As to quaternary structure, may be a homodimer. In terms of processing, ubiquitinated. Upon GA application it is ubiquitinated, leading to its subsequent degradation. Strongly expressed in the vascular tissue and endodermis but barely in the inner cortical cells where arbuscule are formed during arbuscular mycorrhizal (AM) symbiosis.

The protein resides in the nucleus. Probable transcriptional regulator that acts as a repressor of the gibberellin (GA) signaling pathway. Probably acts by participating in large multiprotein complexes that repress transcription of GA-inducible genes. Upon GA application, it is degraded by the proteasome, allowing the GA signaling pathway. Together with DELLA2, required to enable arbuscule development during arbuscular mycorrhizal (AM) symbiosis with AM fungi (e.g. Glomus versiforme) via the regulation of RAM1 which, in turn, regulates various AM genes (e.g. NSP1, NSP2, PT4, LEC5, RAM2, EXO70I, STR and RAD1). The chain is DELLA protein 1 from Medicago truncatula (Barrel medic).